The sequence spans 78 residues: Acyl carrier protein (78 aa).

The region spanning 1-76 is the Carrier domain; that stretch reads MSVAEKVKEI…DAISFIEKKK (76 aa). The residue at position 36 (serine 36) is an O-(pantetheine 4'-phosphoryl)serine.

It belongs to the acyl carrier protein (ACP) family. In terms of processing, 4'-phosphopantetheine is transferred from CoA to a specific serine of apo-ACP by AcpS. This modification is essential for activity because fatty acids are bound in thioester linkage to the sulfhydryl of the prosthetic group.

It is found in the cytoplasm. The protein operates within lipid metabolism; fatty acid biosynthesis. Carrier of the growing fatty acid chain in fatty acid biosynthesis. The sequence is that of Acyl carrier protein from Solidesulfovibrio magneticus (strain ATCC 700980 / DSM 13731 / RS-1) (Desulfovibrio magneticus).